Here is a 788-residue protein sequence, read N- to C-terminus: Endonuclease MutS2 (788 aa).

332-339 lines the ATP pocket; it reads GPNTGGKT. The Smr domain maps to 713 to 788; sequence VDLRGMDAEE…GTGVTVVELK (76 aa).

The protein belongs to the DNA mismatch repair MutS family. MutS2 subfamily. Homodimer. Binds to stalled ribosomes, contacting rRNA.

In terms of biological role, endonuclease that is involved in the suppression of homologous recombination and thus may have a key role in the control of bacterial genetic diversity. Acts as a ribosome collision sensor, splitting the ribosome into its 2 subunits. Detects stalled/collided 70S ribosomes which it binds and splits by an ATP-hydrolysis driven conformational change. Acts upstream of the ribosome quality control system (RQC), a ribosome-associated complex that mediates the extraction of incompletely synthesized nascent chains from stalled ribosomes and their subsequent degradation. Probably generates substrates for RQC. The chain is Endonuclease MutS2 from Clostridium botulinum (strain ATCC 19397 / Type A).